Consider the following 558-residue polypeptide: Atlastin-1 (558 aa).

The disordered stretch occupies residues 1 to 29 (MAKSRRDRNSWGGFSEKSSDWSSEEEEPV). The interval 1 to 34 (MAKSRRDRNSWGGFSEKSSDWSSEEEEPVRKAGP) is N-terminal hypervariable region (HVR). At 1–449 (MAKSRRDRNS…NIFHAARTPA (449 aa)) the chain is on the cytoplasmic side. Phosphoserine occurs at positions 10, 22, and 23. In terms of domain architecture, GB1/RHD3-type G spans 64-309 (DKEVVAVSVA…LIPWLLSPES (246 aa)). Residues R77, K78, G79, K80, S81, F82, Q148, R217, D218, V276, and N279 each contribute to the GDP site. GTP is bound by residues R77, K78, G79, K80, S81, and F82. S81 contacts Mg(2+). The GTP site is built by R217, D218, and V276. Residues 347-438 (MLQATAEANN…YIQYIKHNDS (92 aa)) are 3HB (three-helix bundle) domain. K395 bears the N6-acetyllysine mark. The stretch at 412–439 (EFSRRYLQQLESEIDELYIQYIKHNDSK) forms a coiled coil. The interval 439-447 (KNIFHAART) is linker. The chain crosses the membrane as a helical span at residues 450-470 (TLFVVIFITYVIAGVTGFIGL). D471 is a topological domain (lumenal). A helical transmembrane segment spans residues 472–492 (IIASLCNMIMGLTLITLCTWA). Topologically, residues 493–558 (YIRYSGEYRE…PTEQPEKKKI (66 aa)) are cytoplasmic. The interval 521-558 (NEALYKLYSAAATHRHLYQQAFPAPKSEPTEQPEKKKI) is autoinhibitory domain.

Belongs to the TRAFAC class dynamin-like GTPase superfamily. GB1/RHD3 GTPase family. GB1 subfamily. Monomeric and homodimeric. The homodimer, transiently formed by two molecules on opposing membranes, is the active form mediating ER membrane fusion. Interacts with REEP1, REEP5, RTN3 and RTN4 (via the transmembrane region); these proteins are involved in endoplasmic reticulum tubular network organization. Interacts with ZFYVE27; both proteins are involved in endoplasmic reticulum tubular network organization. Interacts with ARL6IP1; both proteins are involved in endoplasmic reticulum tubular network organization. Interacts with SPAST; the interaction is direct, could recruit SPAST to Golgi membranes. Interacts (via N-terminal region) with MAP4K4 (via CNH regulatory domain). May interact with TMED2. Interacts with CPT1C. Phosphorylated. Phosphorylation, by different kinases, of the N-terminal hypervariable region (HVR) regulates the ATL1-mediated membrane tethering step. Detected in brain where it is abundant in lamina V of the cerebral cortex. Also expressed within the hippocampus, mainly in pyramidal neurons in CA1 and CA3. Weakly expressed in the striatum and more robustly in amygdala and several thalamic nuclei. Also detected in several mesopontine nuclei (at protein level).

The protein localises to the endoplasmic reticulum membrane. The protein resides in the golgi apparatus membrane. Its subcellular location is the cell projection. It localises to the axon. It carries out the reaction GTP + H2O = GDP + phosphate + H(+). Functionally, atlastin-1 (ATL1) is a membrane-anchored GTPase that mediates the GTP-dependent fusion of endoplasmic reticulum (ER) membranes, maintaining the continuous ER network. It facilitates the formation of three-way junctions where ER tubules intersect. Two atlastin-1 on neighboring ER tubules bind GTP and form loose homodimers through the GB1/RHD3-type G domains and 3HB regions. Upon GTP hydrolysis, the 3HB regions tighten, pulling the membranes together to drive their fusion. After fusion, the homodimer disassembles upon release of inorganic phosphate (Pi). Subsequently, GDP dissociates, resetting the monomers to a conformation ready for a new fusion cycle. May also regulate more or less directly Golgi biogenesis. Indirectly regulates axonal development. The chain is Atlastin-1 from Rattus norvegicus (Rat).